The primary structure comprises 206 residues: Large ribosomal subunit protein uL4 (206 aa).

The interval 43 to 78 is disordered; the sequence is ARSGNRKQKDREEVKHTTKKPWRQKGTGRARAGMSS. A compositionally biased stretch (basic and acidic residues) spans 49–58; the sequence is KQKDREEVKH. Residues 59–70 are compositionally biased toward basic residues; the sequence is TTKKPWRQKGTG.

It belongs to the universal ribosomal protein uL4 family. In terms of assembly, part of the 50S ribosomal subunit.

In terms of biological role, one of the primary rRNA binding proteins, this protein initially binds near the 5'-end of the 23S rRNA. It is important during the early stages of 50S assembly. It makes multiple contacts with different domains of the 23S rRNA in the assembled 50S subunit and ribosome. Forms part of the polypeptide exit tunnel. The sequence is that of Large ribosomal subunit protein uL4 from Ralstonia nicotianae (strain ATCC BAA-1114 / GMI1000) (Ralstonia solanacearum).